Consider the following 307-residue polypeptide: GTPase Era (307 aa).

One can recognise an Era-type G domain in the interval 7-181 (RCGWVALLGP…VKLVKSKLPV (175 aa)). Positions 15 to 22 (GPPNAGKS) are G1. Residue 15–22 (GPPNAGKS) coordinates GTP. The tract at residues 41-45 (QTTRN) is G2. Residues 62–65 (DTPG) are G3. Residues 62-66 (DTPGI) and 130-133 (NKVD) each bind GTP. Positions 130-133 (NKVD) are G4. Residues 160 to 162 (VSA) form a G5 region. A KH type-2 domain is found at 212-290 (LRQELPYSVA…HLELWVKVRE (79 aa)).

It belongs to the TRAFAC class TrmE-Era-EngA-EngB-Septin-like GTPase superfamily. Era GTPase family. In terms of assembly, monomer.

Its subcellular location is the cytoplasm. It is found in the cell inner membrane. Functionally, an essential GTPase that binds both GDP and GTP, with rapid nucleotide exchange. Plays a role in 16S rRNA processing and 30S ribosomal subunit biogenesis and possibly also in cell cycle regulation and energy metabolism. In Nitratidesulfovibrio vulgaris (strain DSM 19637 / Miyazaki F) (Desulfovibrio vulgaris), this protein is GTPase Era.